A 241-amino-acid polypeptide reads, in one-letter code: Large ribosomal subunit protein uL1 (241 aa).

Belongs to the universal ribosomal protein uL1 family. In terms of assembly, part of the 50S ribosomal subunit.

Binds directly to 23S rRNA. The L1 stalk is quite mobile in the ribosome, and is involved in E site tRNA release. Functionally, protein L1 is also a translational repressor protein, it controls the translation of the L11 operon by binding to its mRNA. This is Large ribosomal subunit protein uL1 from Thermomicrobium roseum (strain ATCC 27502 / DSM 5159 / P-2).